The primary structure comprises 258 residues: Allene oxide cyclase 3, chloroplastic (258 aa).

A chloroplast-targeting transit peptide spans 1 to 56; that stretch reads MASSSAAMSLESISMTTLNNLSRNHQSHRSSLLGFSRSFQNLGISSNGPDFSSRSR.

This sequence belongs to the allene oxide cyclase family. As to expression, highly expressed in fully developed leaves.

The protein localises to the plastid. It localises to the chloroplast. The catalysed reaction is (9Z,13S,15Z)-12,13-epoxyoctadeca-9,11,15-trienoate = (9S,13S,15Z)-12-oxophyto-10,15-dienoate. In terms of biological role, involved in the production of 12-oxo-phytodienoic acid (OPDA), a precursor of jasmonic acid. This Arabidopsis thaliana (Mouse-ear cress) protein is Allene oxide cyclase 3, chloroplastic (AOC3).